Consider the following 953-residue polypeptide: Zinc finger protein 507 (953 aa).

A Phosphoserine modification is found at S95. 3 C2H2-type zinc fingers span residues 125–147, 155–185, and 248–270; these read YQCS…IKQH, LMCS…ANIH, and YRCL…AWKH. The residue at position 427 (S427) is a Phosphoserine. A disordered region spans residues 470–489; the sequence is KGLATDENAPPGRRRTNSES. 5 C2H2-type zinc fingers span residues 641–663, 669–691, 697–720, 758–780, and 786–808; these read YRCR…LRVH, YQCP…MIHH, YQCK…REQH, YRCD…RRIH, and YRCS…MWKH. The tract at residues 831 to 888 is disordered; that stretch reads GRVLGKSPGKTQLKSSEESADPVTGSSENAVSSSELMSQTPSEVLGTNENEKLSPTSN. The segment covering 854 to 888 has biased composition (polar residues); that stretch reads TGSSENAVSSSELMSQTPSEVLGTNENEKLSPTSN. The segment at 911–933 adopts a C2H2-type 9 zinc-finger fold; the sequence is FCCCICGFESTSKENLLDHMKEH.

This sequence belongs to the krueppel C2H2-type zinc-finger protein family.

It is found in the nucleus. In terms of biological role, may be involved in transcriptional regulation. This is Zinc finger protein 507 (ZNF507) from Homo sapiens (Human).